A 189-amino-acid chain; its full sequence is 3-hydroxyanthranilate 3,4-dioxygenase (189 aa).

Arg-50 is an O2 binding site. His-54, Glu-60, and His-102 together coordinate Fe cation. Residue Glu-60 coordinates substrate. Positions 106 and 116 each coordinate substrate. A divalent metal cation is bound by residues Cys-131, Cys-136, Cys-170, and Cys-173.

The protein belongs to the 3-HAO family. The cofactor is Fe(2+).

Its subcellular location is the cytoplasm. The enzyme catalyses 3-hydroxyanthranilate + O2 = (2Z,4Z)-2-amino-3-carboxymuconate 6-semialdehyde. It functions in the pathway cofactor biosynthesis; NAD(+) biosynthesis; quinolinate from L-kynurenine: step 3/3. Catalyzes the oxidative ring opening of 3-hydroxyanthranilate to 2-amino-3-carboxymuconate semialdehyde, which spontaneously cyclizes to quinolinate. This is 3-hydroxyanthranilate 3,4-dioxygenase (bna1) from Aspergillus niger (strain ATCC MYA-4892 / CBS 513.88 / FGSC A1513).